A 1149-amino-acid polypeptide reads, in one-letter code: MTSTGQDSSTRQRKSRHNPQSPLQESSATLKRGGKKCAVPHSSPNLAEVKKKGKMKKLSQPAEEDLVVGLQGLDLNPETRVPVGTGLVFDEQLNDFHCLWDDSFPESPERLHAIREQLILEGLLGRCVSFQARFAEKEELMLVHSLEYIDLMETTQYMNEGELRVLAETYDSVYLHPNSYSCACLATGSVLRLVDALMGAEIRNGMAVIRPPGHHAQHNLMDGYCMFNHLAVAARYAQKKHRIQRVLIVDWDVHHGQGTQFIFDQDPSVLYFSIHRYEHGRFWPHLKASNWSTIGFGQGQGYTINVPWNQTGMRDADYIAAFLHILLPVASEFQPQLVLVAAGFDALHGDPKGEMAATPAGFAHLTHLLMGLAGGKLILSLEGGYNLRALAKGVSASLHTLLGDPCPMLESCVVPCASAQTSIYCTLEALEPFWEVLERSVETQEEDEVEEAVLEEEEEEGGWEATALPMDTWPLLQNRTGLVYDEKMMSHCNLWDNHHPETPQRILRIMCHLEEVGLAARCLILPARPALDSELLTCHSAEYVEHLRTTEKMKTRDLHREGANFDSIYICPSTFACAKLATGAACRLVEAVLSGEVLNGIAVVRPPGHHAEPNAACGFCFFNSVAVAARHAQIIAGRALRILIVDWDVHHGNGTQHIFEDDPSVLYVSLHRYDRGTFFPMGDEGASSQVGRDAGIGFTVNVPWNGPRMGDADYLAAWHRLVLPIAYEFNPELVLISAGFDAAQGDPLGGCQVTPEGYAHLTHLLMGLAGGRIILILEGGYNLASISESMAACTHSLLGDPPPQLTLLRPPQSGALVSISEVIQVHRKYWRSLRLMKMEDKEECSSSRLVIKKLPPTASPVSAKEMTTPKGKVPEESVRKTIAALPGKESTLGQAKSKMAKAVLAQGQSSEQAAKGTTLDLATSKETVGGATTDLWASAAAPENFPNQTTSVEALGETEPTPPASHTNKQTTGASPLQGVTAQQSLQLGVLSTLELSREAEEAHDSEEGLLGEAAGGQDMNSLMLTQGFGDFNTQDVFYAVTPLSWCPHLMAVCPIPAAGLDVSQPCKTCGTVQENWVCLTCYQVYCSRYVNAHMVCHHEASEHPLVLSCVDLSTWCYVCQAYVHHEDLQDVKNAAHQNKFGEDMPHSH.

The disordered stretch occupies residues 1–61 (MTSTGQDSST…KGKMKKLSQP (61 aa)). A compositionally biased stretch (polar residues) spans 18–29 (NPQSPLQESSAT). Ser21 bears the Phosphoserine mark. Arg32 carries the post-translational modification Omega-N-methylarginine. Ser43 carries the phosphoserine modification. The Nuclear export signal signature appears at 66–75 (LVVGLQGLDL). 2 histone deacetylase regions span residues 87-403 (LVFD…TLLG) and 481-799 (GLVY…SLLG). His215 acts as the 1 in catalysis. Catalysis depends on His610, which acts as the 2. Residues 954-975 (ALGETEPTPPASHTNKQTTGAS) are disordered. Phosphothreonine occurs at positions 958, 961, 967, and 971. A compositionally biased stretch (polar residues) spans 964–975 (ASHTNKQTTGAS). A Phosphoserine modification is found at Ser975. The segment at 1045–1143 (SWCPHLMAVC…NAAHQNKFGE (99 aa)) adopts a UBP-type zinc-finger fold. The Zn(2+) site is built by Cys1047, His1049, Cys1067, Cys1070, Cys1079, Cys1082, and Cys1087. The tract at residues 1088–1090 (SRY) is ubiquitin binding. 5 residues coordinate Zn(2+): His1094, His1098, His1104, Cys1117, and Cys1120. Positions 1116–1123 (WCYVCQAY) are ubiquitin binding. Position 1148 is a phosphoserine (Ser1148).

Belongs to the histone deacetylase family. HD type 2 subfamily. Forms a trimeric complex in the nucleus consisting of BANP, HDAC6 and KHDRBS1/SAM68; HDAC6 keeps KHDRBS1 in a deacetylated state which inhibits the inclusion of CD44 alternate exons. The complex is disrupted by MAPK1/MAPK3-mediated phosphorylation of BANP which results in BANP export to the cytoplasm. This facilitates acetylation of KHDRBS1 and CD44 variant exon inclusion. Interacts with SIRT2 (via both phosphorylated, unphosphorylated, active or inactive forms); the interaction is necessary for the complex to interact with alpha-tubulin. Under proteasome impairment conditions, interacts with UBD via its histone deacetylase 1 and UBP-type zinc-finger regions. Interacts with BBIP1, CBFA2T3, CYLD, DDIT3/CHOP, ZMYND15, F-actin and HDAC11. Interacts with RIPOR2; this interaction occurs during early myogenic differentiation and prevents HDAC6 to deacetylate tubulin. Interacts with AURKA; AURKA-mediated phosphorylation of HDAC6 promotes deacetylation of alpha-tubulin. Interacts with DYSF; this interaction occurs during early myogenic differentiation. Interacts with TPPP; inhibiting the tubulin deacetylase activity of HDAC6. Interacts with DYNLL1. Interacts with ATP13A2; the interaction results in recruitment of HDAC6 to lysosomes to promote CTTN deacetylation. Interacts with CCDC141 (via the N-terminal region); inhibiting the deacetylase activity of HDAC6. Interacts with IPO7; the interaction facilitates HDAC6 nuclear translocation in dental papilla cells. Requires Zn(2+) as cofactor. In terms of processing, phosphorylated by AURKA; phosphorylation increases HDAC6-mediated deacetylation of alpha-tubulin and subsequent disassembly of cilia. Ubiquitinated. Its polyubiquitination however does not lead to its degradation. Post-translationally, sumoylated in vitro. Expressed in neurons of the cortex. Expressed in Purkinje cells. Detected in keratinocytes (at protein level).

It is found in the cytoplasm. Its subcellular location is the cytoskeleton. The protein localises to the nucleus. The protein resides in the perikaryon. It localises to the cell projection. It is found in the dendrite. Its subcellular location is the axon. The protein localises to the cilium. The protein resides in the microtubule organizing center. It localises to the centrosome. It is found in the cilium basal body. The enzyme catalyses N(6)-acetyl-L-lysyl-[protein] + H2O = L-lysyl-[protein] + acetate. It catalyses the reaction N(6)-acetyl-L-lysyl-[alpha-tubulin] + H2O = L-lysyl-[alpha-tubulin] + acetate. The protein operates within protein modification; protein ubiquitination. Its function is as follows. Deacetylates a wide range of non-histone substrates. Plays a central role in microtubule-dependent cell motility by mediating deacetylation of tubulin. Required for cilia disassembly via deacetylation of alpha-tubulin. Alpha-tubulin deacetylation results in destabilization of dynamic microtubules. Promotes deacetylation of CTTN, leading to actin polymerization, promotion of autophagosome-lysosome fusion and completion of autophagy. Deacetylates SQSTM1. Deacetylates peroxiredoxins PRDX1 and PRDX2, decreasing their reducing activity. Deacetylates antiviral protein RIGI in the presence of viral mRNAs which is required for viral RNA detection by RIGI. Sequentially deacetylates and polyubiquitinates DNA mismatch repair protein MSH2 which leads to MSH2 degradation, reducing cellular sensitivity to DNA-damaging agents and decreasing cellular DNA mismatch repair activities. Deacetylates DNA mismatch repair protein MLH1 which prevents recruitment of the MutL alpha complex (formed by the MLH1-PMS2 heterodimer) to the MutS alpha complex (formed by the MSH2-MSH6 heterodimer), leading to tolerance of DNA damage. Deacetylates RHOT1/MIRO1 which blocks mitochondrial transport and mediates axon growth inhibition. Deacetylates transcription factor SP1 which leads to increased expression of ENG, positively regulating angiogenesis. Deacetylates KHDRBS1/SAM68 which regulates alternative splicing by inhibiting the inclusion of CD44 alternate exons. Promotes odontoblast differentiation following IPO7-mediated nuclear import and subsequent repression of RUNX2 expression. In addition to its protein deacetylase activity, plays a key role in the degradation of misfolded proteins: when misfolded proteins are too abundant to be degraded by the chaperone refolding system and the ubiquitin-proteasome, mediates the transport of misfolded proteins to a cytoplasmic juxtanuclear structure called aggresome. Probably acts as an adapter that recognizes polyubiquitinated misfolded proteins and target them to the aggresome, facilitating their clearance by autophagy. This is Protein deacetylase HDAC6 from Mus musculus (Mouse).